A 473-amino-acid chain; its full sequence is MKTDTSTFLAQQIVRLRRRDQIRRLMQRDKTPLAILFMAAVVGTLTGLVGVAFEKAVSWVQNMRIGALVQVADHAFLLWPLAFILSALLAMVGYFLVRKFAPEAGGSGIPEIEGALEELRPVRWWRVLPVKFIGGMGTLGAGMVLGREGPTVQIGGNLGRMVLDVFRMRSAEARHTLLATGAAAGLSAAFNAPLAGILFIIEEMRPQFRYNLISIKAVFTGVIMSSIVFRIFNGEAPIIEVGKLSDAPVNTLWLYLILGIIFGCVGPVFNSLVLRTQDMFQRFHGGEIKKWVLMGGAIGGLCGILGLIEPEAAGGGFNLIPIAAAGNFSVGLLLFIFITRVVTTLLCFSSGAPGGIFAPMLALGTLLGTAFGMAAAVLFPQYHLEAGTFAIAGMGALMAASVRAPLTGIVLVLEMTDNYQLILPMIITCLGATLLAQFLGGKPLYSTILARTLAKQDAEQAAKNQNASAGENT.

Over methionine 1–proline 32 the chain is Cytoplasmic. A helical membrane pass occupies residues leucine 33–valine 69. Over glutamine 70 to phenylalanine 76 the chain is Periplasmic. Residues leucine 77–phenylalanine 100 traverse the membrane as a helical segment. Positions glycine 106–proline 110 match the Selectivity filter part_1 motif. Chloride is bound at residue serine 107. Positions isoleucine 109 to leucine 116 form an intramembrane region, helical. The Cytoplasmic segment spans residues glutamate 117 to arginine 123. Helical transmembrane passes span tryptophan 124–alanine 141 and glutamate 148–phenylalanine 166. Positions glycine 146–proline 150 match the Selectivity filter part_2 motif. Residues arginine 167–threonine 176 lie on the Cytoplasmic side of the membrane. 2 intramembrane regions (helical) span residues leucine 177–alanine 189 and proline 193–isoleucine 201. The Cytoplasmic segment spans residues glutamate 202–serine 214. A helical membrane pass occupies residues isoleucine 215–phenylalanine 232. At asparagine 233–leucine 252 the chain is on the periplasmic side. The helical transmembrane segment at tryptophan 253–glutamine 281 threads the bilayer. Over arginine 282–glutamate 287 the chain is Cytoplasmic. Residues isoleucine 288–glutamate 309 traverse the membrane as a helical segment. Topologically, residues proline 310–serine 329 are periplasmic. Transmembrane regions (helical) follow at residues valine 330–serine 349 and glycine 355–alanine 376. The Selectivity filter part_3 signature appears at glycine 355–proline 359. Positions 356 and 357 each coordinate chloride. Over valine 377–alanine 386 the chain is Periplasmic. Positions glycine 387 to serine 401 form an intramembrane region, helical. The segment at residues valine 402–alanine 404 is an intramembrane region (note=Loop between two helices). The helical intramembrane region spans proline 405–threonine 416. Residues aspartate 417–leucine 421 constitute an intramembrane region (note=Loop between two helices). The helical transmembrane segment at isoleucine 422–phenylalanine 438 threads the bilayer. Topologically, residues leucine 439 to threonine 473 are cytoplasmic. Tyrosine 445 lines the chloride pocket.

The protein belongs to the chloride channel (TC 2.A.49) family. ClcA subfamily. As to quaternary structure, homodimer.

Its subcellular location is the cell inner membrane. The catalysed reaction is 2 chloride(in) + H(+)(out) = 2 chloride(out) + H(+)(in). Functionally, proton-coupled chloride transporter. Functions as antiport system and exchanges two chloride ions for 1 proton. Probably acts as an electrical shunt for an outwardly-directed proton pump that is linked to amino acid decarboxylation, as part of the extreme acid resistance (XAR) response. The protein is H(+)/Cl(-) exchange transporter ClcA of Salmonella choleraesuis (strain SC-B67).